We begin with the raw amino-acid sequence, 36 residues long: Cytochrome b6-f complex subunit 7 (36 aa).

Topologically, residues 1 to 5 are lumenal; the sequence is NAAAE. The chain crosses the membrane as a helical span at residues 6-28; the sequence is IFRIAAVMNGLTLVGVAIGFVLL. The Stromal segment spans residues 29 to 36; the sequence is RIEATVEE.

Belongs to the PetM family. As to quaternary structure, the 4 large subunits of the cytochrome b6-f complex are cytochrome b6, subunit IV (17 kDa polypeptide, PetD), cytochrome f and the Rieske protein, while the 4 small subunits are PetG, PetL, PetM and PetN. The complex functions as a dimer.

Its subcellular location is the plastid. The protein resides in the chloroplast thylakoid membrane. Its function is as follows. Component of the cytochrome b6-f complex, which mediates electron transfer between photosystem II (PSII) and photosystem I (PSI), cyclic electron flow around PSI, and state transitions. The chain is Cytochrome b6-f complex subunit 7 from Spinacia oleracea (Spinach).